Here is a 623-residue protein sequence, read N- to C-terminus: Sterol O-acyltransferase 1 (623 aa).

Positions 20 to 99 are disordered; it reads NSAEPSKRHS…EQAEEKYPVD (80 aa). Positions 57–72 are enriched in low complexity; that stretch reads ATTTATGVAVAAAAAA. Acidic residues predominate over residues 83–92; it reads DGDDEQDEQA. 5 consecutive transmembrane segments (helical) span residues 195–215, 242–262, 277–297, 384–404, and 422–442; these read LESN…WIAF, LFTI…VVFV, GFVA…PVYV, ISCS…QINY, and IMGT…PVAM. An FYXDWWN motif motif is present at residues 504 to 510; it reads FYGDWWN. Transmembrane regions (helical) follow at residues 548-568 and 603-623; these read ATLF…FAIF and VVFT…YLTL. H560 is an active-site residue.

This sequence belongs to the membrane-bound acyltransferase family. Sterol o-acyltransferase subfamily.

The protein resides in the endoplasmic reticulum membrane. Functionally, sterol O-acyltransferase that catalyzes the formation of stery esters. This is Sterol O-acyltransferase 1 (ARE1) from Saccharomyces uvarum (strain ATCC 76518 / CBS 7001 / CLIB 283 / NBRC 10550 / MCYC 623 / NCYC 2669 / NRRL Y-11845) (Yeast).